We begin with the raw amino-acid sequence, 122 residues long: Large ribosomal subunit protein uL14 (122 aa).

The protein belongs to the universal ribosomal protein uL14 family. In terms of assembly, part of the 50S ribosomal subunit. Forms a cluster with proteins L3 and L19. In the 70S ribosome, L14 and L19 interact and together make contacts with the 16S rRNA in bridges B5 and B8.

In terms of biological role, binds to 23S rRNA. Forms part of two intersubunit bridges in the 70S ribosome. This Natranaerobius thermophilus (strain ATCC BAA-1301 / DSM 18059 / JW/NM-WN-LF) protein is Large ribosomal subunit protein uL14.